The primary structure comprises 759 residues: ARF GTPase-activating protein GIT2 (759 aa).

An Arf-GAP domain is found at Met1–Asp124. The segment at Cys11 to Cys34 adopts a C4-type zinc-finger fold. 3 ANK repeats span residues Asp132–Phe161, Lys166–Ser198, and Ser199–Asp228. Disordered regions lie at residues Val376 to Asp422 and Gln469 to Glu641. Over residues Gln385–Asp402 the composition is skewed to acidic residues. Positions Asn451–Gln478 form a coiled coil. The segment covering Gln469–Ala489 has biased composition (polar residues). Residues Thr555–Trp569 show a composition bias toward low complexity. Positions Ser570 to Lys583 are enriched in basic and acidic residues.

In terms of assembly, may form heterooligomers with GIT1. Directly interacts with protein Piccolo/PCLO. Interacts with PPFIA1 and PPFIA2. Interacts with ARHGEF7. Identified in a complex with ARHGEF6 and BIN2. Interacts with PAK3. Interacts with PXN/paxillin. Interacts with TGFB1I1. Forms a complex with EFNB1 and GRB4/NCK2.

Its function is as follows. GTPase-activating protein for ADP ribosylation factor family members, including ARF1. This Rattus norvegicus (Rat) protein is ARF GTPase-activating protein GIT2 (Git2).